The primary structure comprises 272 residues: Ribosomal RNA small subunit methyltransferase A (272 aa).

Histidine 11, leucine 13, glycine 38, glutamate 59, aspartate 84, and asparagine 109 together coordinate S-adenosyl-L-methionine.

This sequence belongs to the class I-like SAM-binding methyltransferase superfamily. rRNA adenine N(6)-methyltransferase family. RsmA subfamily.

It localises to the cytoplasm. It carries out the reaction adenosine(1518)/adenosine(1519) in 16S rRNA + 4 S-adenosyl-L-methionine = N(6)-dimethyladenosine(1518)/N(6)-dimethyladenosine(1519) in 16S rRNA + 4 S-adenosyl-L-homocysteine + 4 H(+). Specifically dimethylates two adjacent adenosines (A1518 and A1519) in the loop of a conserved hairpin near the 3'-end of 16S rRNA in the 30S particle. May play a critical role in biogenesis of 30S subunits. This chain is Ribosomal RNA small subunit methyltransferase A, found in Rippkaea orientalis (strain PCC 8801 / RF-1) (Cyanothece sp. (strain PCC 8801)).